Consider the following 748-residue polypeptide: Polyribonucleotide nucleotidyltransferase (748 aa).

Mg(2+) is bound by residues Asp-484 and Asp-490. A KH domain is found at 551–610; sequence PRIETMSVPKDKIRDVIGTGGKVIREIVATTGAKVDIEDDGTVRLSSSDPANIEAAREWI. An S1 motif domain is found at 620 to 688; the sequence is GKIYNGKVVN…NRGKVRLSMR (69 aa). Residues 693-748 form a disordered region; sequence ETGAELDDNRPPRENAERRGGERPRRDRGPRRESGDRPARRDMEPEFAPAFLRKDS. The span at 699-736 shows a compositional bias: basic and acidic residues; the sequence is DDNRPPRENAERRGGERPRRDRGPRRESGDRPARRDME.

Belongs to the polyribonucleotide nucleotidyltransferase family. Requires Mg(2+) as cofactor.

It localises to the cytoplasm. The enzyme catalyses RNA(n+1) + phosphate = RNA(n) + a ribonucleoside 5'-diphosphate. Its function is as follows. Involved in mRNA degradation. Catalyzes the phosphorolysis of single-stranded polyribonucleotides processively in the 3'- to 5'-direction. This is Polyribonucleotide nucleotidyltransferase from Zymomonas mobilis subsp. mobilis (strain ATCC 31821 / ZM4 / CP4).